A 598-amino-acid chain; its full sequence is Elongation factor 4 (598 aa).

A tr-type G domain is found at 4-186 (DHIRNFSIIA…AIVKRVPPPK (183 aa)). Residues 16 to 21 (DHGKST) and 133 to 136 (NKID) contribute to the GTP site.

Belongs to the TRAFAC class translation factor GTPase superfamily. Classic translation factor GTPase family. LepA subfamily.

Its subcellular location is the cell inner membrane. The catalysed reaction is GTP + H2O = GDP + phosphate + H(+). In terms of biological role, required for accurate and efficient protein synthesis under certain stress conditions. May act as a fidelity factor of the translation reaction, by catalyzing a one-codon backward translocation of tRNAs on improperly translocated ribosomes. Back-translocation proceeds from a post-translocation (POST) complex to a pre-translocation (PRE) complex, thus giving elongation factor G a second chance to translocate the tRNAs correctly. Binds to ribosomes in a GTP-dependent manner. This is Elongation factor 4 from Magnetococcus marinus (strain ATCC BAA-1437 / JCM 17883 / MC-1).